The primary structure comprises 283 residues: 2-heptyl-4(1H)-quinolone synthase subunit PqsB (283 aa).

It belongs to the thiolase-like superfamily. FabH family. As to quaternary structure, forms a tight complex with PqsC.

The protein localises to the cytoplasm. Its activity is regulated as follows. Activity of the complex is inhibited by 2-aminoacetophenone (2-AA). In terms of biological role, required for the biosynthesis of the quorum-sensing signaling molecules 2-heptyl-4(1H)-quinolone (HHQ) and 2-heptyl-3-hydroxy-4(1H)-quinolone (Pseudomonas quinolone signal or PQS), which are important for biofilm formation and virulence. The PqsC/PqsB complex catalyzes the condensation of 2-aminobenzoylacetate (2-ABA) and octanoyl-CoA to form HHQ. PqsB, together with PqsC, catalyzes the coupling of 2-ABA with the octanoate group, leading to decarboxylation and dehydration, and resulting in closure of the quinoline ring. PqsB is probably required for the proper folding of PqsC rather than for a direct enzymatic role in the process. This Pseudomonas aeruginosa (strain ATCC 15692 / DSM 22644 / CIP 104116 / JCM 14847 / LMG 12228 / 1C / PRS 101 / PAO1) protein is 2-heptyl-4(1H)-quinolone synthase subunit PqsB.